The chain runs to 620 residues: PAN2-PAN3 deadenylation complex subunit PAN3 (620 aa).

The C3H1-type zinc-finger motif lies at 7–36 (SAKGTLCKNILIYGYCKYENKGCAFSHRRN). Disordered stretches follow at residues 39-73 (ANSG…QPST) and 95-168 (VFVP…QPGP). Composition is skewed to polar residues over residues 63–73 (NVNTPSFQPST) and 101–126 (TPAS…TVSN). A pseudokinase domain region spans residues 226 to 482 (QSYPGGPEIV…LESYIRKHLA (257 aa)). ATP-binding positions include arginine 274, 323–330 (DYYPNAST), and 380–381 (SK). The stretch at 483–521 (IRLLDVVDMLEDSNDYLESQLSTELENARLVRLMTKINF) forms a coiled coil. A knob domain region spans residues 522–620 (IVDRPEWDNE…SVFRTITRGK (99 aa)).

Belongs to the protein kinase superfamily. PAN3 family. As to quaternary structure, homodimer. Forms a heterotrimer with a catalytic subunit PAN2 to form the poly(A)-nuclease (PAN) deadenylation complex. Interacts (via PAM-2 motif) with poly(A)-binding protein PAB1 (via PABC domain), conferring substrate specificity of the enzyme complex.

Its subcellular location is the cytoplasm. Functionally, regulatory subunit of the poly(A)-nuclease (PAN) deadenylation complex, one of two cytoplasmic mRNA deadenylases involved in mRNA turnover. PAN specifically shortens poly(A) tails of RNA and the activity is stimulated by poly(A)-binding protein PAB1. PAN deadenylation is followed by rapid degradation of the shortened mRNA tails by the CCR4-NOT complex. Deadenylated mRNAs are then degraded by two alternative mechanisms, namely exosome-mediated 3'-5' exonucleolytic degradation, or deadenylation-dependent mRNA decaping and subsequent 5'-3' exonucleolytic degradation by XRN1. May also be involved in post-transcriptional maturation of mRNA poly(A) tails. PAN3 acts as a positive regulator for PAN activity, recruiting the catalytic subunit PAN2 to mRNA via its interaction with RNA and with PAB1. This is PAN2-PAN3 deadenylation complex subunit PAN3 from Meyerozyma guilliermondii (strain ATCC 6260 / CBS 566 / DSM 6381 / JCM 1539 / NBRC 10279 / NRRL Y-324) (Yeast).